Consider the following 262-residue polypeptide: Small ribosomal subunit protein eS1 (262 aa).

Belongs to the eukaryotic ribosomal protein eS1 family. As to quaternary structure, component of the small ribosomal subunit. Mature ribosomes consist of a small (40S) and a large (60S) subunit. The 40S subunit contains about 33 different proteins and 1 molecule of RNA (18S). The 60S subunit contains about 49 different proteins and 3 molecules of RNA (25S, 5.8S and 5S).

The protein resides in the cytoplasm. The chain is Small ribosomal subunit protein eS1 from Brassica campestris (Field mustard).